A 138-amino-acid polypeptide reads, in one-letter code: Large ribosomal subunit protein bL19 (138 aa).

Belongs to the bacterial ribosomal protein bL19 family.

Functionally, this protein is located at the 30S-50S ribosomal subunit interface and may play a role in the structure and function of the aminoacyl-tRNA binding site. The sequence is that of Large ribosomal subunit protein bL19 from Rickettsia massiliae (strain Mtu5).